A 370-amino-acid chain; its full sequence is Ribosomal RNA small subunit methyltransferase H (370 aa).

Residues 85 to 87, Asp-104, Tyr-131, Asp-152, and Gln-159 each bind S-adenosyl-L-methionine; that span reads GGH. Composition is skewed to basic and acidic residues over residues 332-345 and 353-370; these read GAER…ERNP and RALE…RDAR. Residues 332 to 370 are disordered; the sequence is GAERATPEEIERNPRSAPVRLRALEKVAGRPTTARRDAR.

It belongs to the methyltransferase superfamily. RsmH family.

Its subcellular location is the cytoplasm. It carries out the reaction cytidine(1402) in 16S rRNA + S-adenosyl-L-methionine = N(4)-methylcytidine(1402) in 16S rRNA + S-adenosyl-L-homocysteine + H(+). Functionally, specifically methylates the N4 position of cytidine in position 1402 (C1402) of 16S rRNA. The protein is Ribosomal RNA small subunit methyltransferase H of Mycobacterium sp. (strain KMS).